A 304-amino-acid polypeptide reads, in one-letter code: tRNA pseudouridine synthase B (304 aa).

The active-site Nucleophile is D47. The interval 85 to 105 (TNTDDGEGEVTETSDARPSDD) is disordered.

The protein belongs to the pseudouridine synthase TruB family. Type 1 subfamily.

The catalysed reaction is uridine(55) in tRNA = pseudouridine(55) in tRNA. In terms of biological role, responsible for synthesis of pseudouridine from uracil-55 in the psi GC loop of transfer RNAs. This Dinoroseobacter shibae (strain DSM 16493 / NCIMB 14021 / DFL 12) protein is tRNA pseudouridine synthase B.